A 291-amino-acid chain; its full sequence is Formamidopyrimidine-DNA glycosylase (291 aa).

The active-site Schiff-base intermediate with DNA is Pro2. The active-site Proton donor is the Glu3. Lys58 functions as the Proton donor; for beta-elimination activity in the catalytic mechanism. DNA contacts are provided by His104, Arg123, and Lys166. Residues 257 to 291 (KVYDREGKPCPTCGGTVQRFVQNGRSTFWCPKCQK) form an FPG-type zinc finger. Arg281 (proton donor; for delta-elimination activity) is an active-site residue.

It belongs to the FPG family. As to quaternary structure, monomer. Zn(2+) serves as cofactor.

It catalyses the reaction Hydrolysis of DNA containing ring-opened 7-methylguanine residues, releasing 2,6-diamino-4-hydroxy-5-(N-methyl)formamidopyrimidine.. The catalysed reaction is 2'-deoxyribonucleotide-(2'-deoxyribose 5'-phosphate)-2'-deoxyribonucleotide-DNA = a 3'-end 2'-deoxyribonucleotide-(2,3-dehydro-2,3-deoxyribose 5'-phosphate)-DNA + a 5'-end 5'-phospho-2'-deoxyribonucleoside-DNA + H(+). Involved in base excision repair of DNA damaged by oxidation or by mutagenic agents. Acts as a DNA glycosylase that recognizes and removes damaged bases. Has a preference for oxidized purines, such as 7,8-dihydro-8-oxoguanine (8-oxoG). Has AP (apurinic/apyrimidinic) lyase activity and introduces nicks in the DNA strand. Cleaves the DNA backbone by beta-delta elimination to generate a single-strand break at the site of the removed base with both 3'- and 5'-phosphates. The protein is Formamidopyrimidine-DNA glycosylase of Rhodopseudomonas palustris (strain TIE-1).